We begin with the raw amino-acid sequence, 377 residues long: Queuine tRNA-ribosyltransferase (377 aa).

The Proton acceptor role is filled by D89. Substrate-binding positions include 89-93 (DSGGF), D143, Q188, and G215. Positions 246-252 (GVGKPED) are RNA binding. D265 acts as the Nucleophile in catalysis. Residues 270 to 274 (TRNAR) form an RNA binding; important for wobble base 34 recognition region. Zn(2+) is bound by residues C303, C305, C308, and H334.

It belongs to the queuine tRNA-ribosyltransferase family. As to quaternary structure, homodimer. Within each dimer, one monomer is responsible for RNA recognition and catalysis, while the other monomer binds to the replacement base PreQ1. The cofactor is Zn(2+).

It catalyses the reaction 7-aminomethyl-7-carbaguanine + guanosine(34) in tRNA = 7-aminomethyl-7-carbaguanosine(34) in tRNA + guanine. It functions in the pathway tRNA modification; tRNA-queuosine biosynthesis. Functionally, catalyzes the base-exchange of a guanine (G) residue with the queuine precursor 7-aminomethyl-7-deazaguanine (PreQ1) at position 34 (anticodon wobble position) in tRNAs with GU(N) anticodons (tRNA-Asp, -Asn, -His and -Tyr). Catalysis occurs through a double-displacement mechanism. The nucleophile active site attacks the C1' of nucleotide 34 to detach the guanine base from the RNA, forming a covalent enzyme-RNA intermediate. The proton acceptor active site deprotonates the incoming PreQ1, allowing a nucleophilic attack on the C1' of the ribose to form the product. After dissociation, two additional enzymatic reactions on the tRNA convert PreQ1 to queuine (Q), resulting in the hypermodified nucleoside queuosine (7-(((4,5-cis-dihydroxy-2-cyclopenten-1-yl)amino)methyl)-7-deazaguanosine). This Acinetobacter baumannii (strain ACICU) protein is Queuine tRNA-ribosyltransferase.